A 117-amino-acid chain; its full sequence is Large ribosomal subunit protein bL19 (117 aa).

Belongs to the bacterial ribosomal protein bL19 family.

Its function is as follows. This protein is located at the 30S-50S ribosomal subunit interface and may play a role in the structure and function of the aminoacyl-tRNA binding site. In Thioalkalivibrio sulfidiphilus (strain HL-EbGR7), this protein is Large ribosomal subunit protein bL19.